A 151-amino-acid chain; its full sequence is Small ribosomal subunit protein uS15y (151 aa).

It belongs to the universal ribosomal protein uS15 family.

This is Small ribosomal subunit protein uS15y from Oryza sativa subsp. japonica (Rice).